The sequence spans 310 residues: tRNA pseudouridine synthase B (310 aa).

D49 (nucleophile) is an active-site residue.

This sequence belongs to the pseudouridine synthase TruB family. Type 1 subfamily.

The enzyme catalyses uridine(55) in tRNA = pseudouridine(55) in tRNA. Functionally, responsible for synthesis of pseudouridine from uracil-55 in the psi GC loop of transfer RNAs. In Idiomarina loihiensis (strain ATCC BAA-735 / DSM 15497 / L2-TR), this protein is tRNA pseudouridine synthase B.